Here is a 345-residue protein sequence, read N- to C-terminus: GTP cyclohydrolase-2 (345 aa).

Positions 1–27 are disordered; sequence MTIDNYDNSKQDSSKYEVSGTGDGRNG. 143-147 is a GTP binding site; the sequence is RIHSE. Residues C148, C159, and C161 each contribute to the Zn(2+) site. Residues Q164, 197-199, and T219 each bind GTP; that span reads EGR. D231 (proton acceptor) is an active-site residue. R233 serves as the catalytic Nucleophile. Residues T254 and K259 each coordinate GTP. Residues 312–345 are disordered; it reads PLKLHTNPQPTETSEAQNQNRMNSALSSTSTLAI. Positions 317–345 are enriched in polar residues; it reads TNPQPTETSEAQNQNRMNSALSSTSTLAI.

Belongs to the GTP cyclohydrolase II family. Requires Zn(2+) as cofactor.

The catalysed reaction is GTP + 4 H2O = 2,5-diamino-6-hydroxy-4-(5-phosphoribosylamino)-pyrimidine + formate + 2 phosphate + 3 H(+). It participates in cofactor biosynthesis; riboflavin biosynthesis; 5-amino-6-(D-ribitylamino)uracil from GTP: step 1/4. Catalyzes the conversion of GTP to 2,5-diamino-6-ribosylamino-4(3H)-pyrimidinone 5'-phosphate (DARP), formate and pyrophosphate. This Saccharomyces cerevisiae (strain ATCC 204508 / S288c) (Baker's yeast) protein is GTP cyclohydrolase-2 (RIB1).